Here is a 289-residue protein sequence, read N- to C-terminus: 4-hydroxy-tetrahydrodipicolinate synthase (289 aa).

Thr43 provides a ligand contact to pyruvate. The Proton donor/acceptor role is filled by Tyr131. The active-site Schiff-base intermediate with substrate is Lys160. Ile200 serves as a coordination point for pyruvate.

The protein belongs to the DapA family. As to quaternary structure, homotetramer; dimer of dimers.

Its subcellular location is the cytoplasm. It carries out the reaction L-aspartate 4-semialdehyde + pyruvate = (2S,4S)-4-hydroxy-2,3,4,5-tetrahydrodipicolinate + H2O + H(+). It participates in amino-acid biosynthesis; L-lysine biosynthesis via DAP pathway; (S)-tetrahydrodipicolinate from L-aspartate: step 3/4. Functionally, catalyzes the condensation of (S)-aspartate-beta-semialdehyde [(S)-ASA] and pyruvate to 4-hydroxy-tetrahydrodipicolinate (HTPA). This is 4-hydroxy-tetrahydrodipicolinate synthase from Methanococcus vannielii (strain ATCC 35089 / DSM 1224 / JCM 13029 / OCM 148 / SB).